The following is a 141-amino-acid chain: Ribonuclease P protein component (141 aa).

The protein belongs to the RnpA family. As to quaternary structure, consists of a catalytic RNA component (M1 or rnpB) and a protein subunit.

It carries out the reaction Endonucleolytic cleavage of RNA, removing 5'-extranucleotides from tRNA precursor.. In terms of biological role, RNaseP catalyzes the removal of the 5'-leader sequence from pre-tRNA to produce the mature 5'-terminus. It can also cleave other RNA substrates such as 4.5S RNA. The protein component plays an auxiliary but essential role in vivo by binding to the 5'-leader sequence and broadening the substrate specificity of the ribozyme. The protein is Ribonuclease P protein component of Onion yellows phytoplasma (strain OY-M).